The following is a 179-amino-acid chain: Large ribosomal subunit protein uL5 (179 aa).

This sequence belongs to the universal ribosomal protein uL5 family. As to quaternary structure, part of the 50S ribosomal subunit; part of the 5S rRNA/L5/L18/L25 subcomplex. Contacts the 5S rRNA and the P site tRNA. Forms a bridge to the 30S subunit in the 70S ribosome.

This is one of the proteins that bind and probably mediate the attachment of the 5S RNA into the large ribosomal subunit, where it forms part of the central protuberance. In the 70S ribosome it contacts protein S13 of the 30S subunit (bridge B1b), connecting the 2 subunits; this bridge is implicated in subunit movement. Contacts the P site tRNA; the 5S rRNA and some of its associated proteins might help stabilize positioning of ribosome-bound tRNAs. The polypeptide is Large ribosomal subunit protein uL5 (Prochlorococcus marinus (strain NATL1A)).